The sequence spans 412 residues: Multifunctional CCA protein (412 aa).

Residues G8 and R11 each contribute to the ATP site. Residues G8 and R11 each contribute to the CTP site. The Mg(2+) site is built by D21 and D23. Residues R91, R137, and R140 each contribute to the ATP site. CTP is bound by residues R91, R137, and R140. An HD domain is found at 228–329 (TGIHTLMTLS…VKLFDSIDAW (102 aa)).

The protein belongs to the tRNA nucleotidyltransferase/poly(A) polymerase family. Bacterial CCA-adding enzyme type 1 subfamily. As to quaternary structure, monomer. Can also form homodimers and oligomers. Mg(2+) is required as a cofactor. The cofactor is Ni(2+).

The enzyme catalyses a tRNA precursor + 2 CTP + ATP = a tRNA with a 3' CCA end + 3 diphosphate. The catalysed reaction is a tRNA with a 3' CCA end + 2 CTP + ATP = a tRNA with a 3' CCACCA end + 3 diphosphate. Its function is as follows. Catalyzes the addition and repair of the essential 3'-terminal CCA sequence in tRNAs without using a nucleic acid template. Adds these three nucleotides in the order of C, C, and A to the tRNA nucleotide-73, using CTP and ATP as substrates and producing inorganic pyrophosphate. tRNA 3'-terminal CCA addition is required both for tRNA processing and repair. Also involved in tRNA surveillance by mediating tandem CCA addition to generate a CCACCA at the 3' terminus of unstable tRNAs. While stable tRNAs receive only 3'-terminal CCA, unstable tRNAs are marked with CCACCA and rapidly degraded. The sequence is that of Multifunctional CCA protein from Shigella flexneri serotype 5b (strain 8401).